We begin with the raw amino-acid sequence, 220 residues long: Thiamine-phosphate synthase (220 aa).

4-amino-2-methyl-5-(diphosphooxymethyl)pyrimidine-binding positions include 38–42 and N70; that span reads QYRDK. 2 residues coordinate Mg(2+): D71 and D90. Position 109 (T109) interacts with 4-amino-2-methyl-5-(diphosphooxymethyl)pyrimidine. 135–137 is a binding site for 2-[(2R,5Z)-2-carboxy-4-methylthiazol-5(2H)-ylidene]ethyl phosphate; that stretch reads TVS. Residue K138 participates in 4-amino-2-methyl-5-(diphosphooxymethyl)pyrimidine binding. 2-[(2R,5Z)-2-carboxy-4-methylthiazol-5(2H)-ylidene]ethyl phosphate-binding positions include G171 and 191-192; that span reads IS.

This sequence belongs to the thiamine-phosphate synthase family. It depends on Mg(2+) as a cofactor.

It carries out the reaction 2-[(2R,5Z)-2-carboxy-4-methylthiazol-5(2H)-ylidene]ethyl phosphate + 4-amino-2-methyl-5-(diphosphooxymethyl)pyrimidine + 2 H(+) = thiamine phosphate + CO2 + diphosphate. The catalysed reaction is 2-(2-carboxy-4-methylthiazol-5-yl)ethyl phosphate + 4-amino-2-methyl-5-(diphosphooxymethyl)pyrimidine + 2 H(+) = thiamine phosphate + CO2 + diphosphate. The enzyme catalyses 4-methyl-5-(2-phosphooxyethyl)-thiazole + 4-amino-2-methyl-5-(diphosphooxymethyl)pyrimidine + H(+) = thiamine phosphate + diphosphate. Its pathway is cofactor biosynthesis; thiamine diphosphate biosynthesis; thiamine phosphate from 4-amino-2-methyl-5-diphosphomethylpyrimidine and 4-methyl-5-(2-phosphoethyl)-thiazole: step 1/1. Functionally, condenses 4-methyl-5-(beta-hydroxyethyl)thiazole monophosphate (THZ-P) and 2-methyl-4-amino-5-hydroxymethyl pyrimidine pyrophosphate (HMP-PP) to form thiamine monophosphate (TMP). The protein is Thiamine-phosphate synthase of Agrobacterium fabrum (strain C58 / ATCC 33970) (Agrobacterium tumefaciens (strain C58)).